The chain runs to 2472 residues: Spectrin alpha chain, non-erythrocytic 1 (2472 aa).

An N-acetylmethionine modification is found at Met1. Spectrin repeat units follow at residues 45–146 (RFQF…IKLL), 150–251 (KLVQ…QGKL), 256–358 (EVQR…ARLN), 361–465 (YRLQ…QYEQ), 468–570 (DLQL…AQLA), 574–676 (HLQQ…KLRE), 679–781 (QQQQ…QKLA), 785–888 (RLQQ…DLED), and 891–969 (QAQQ…ETGK). Ser587 carries the post-translational modification Phosphoserine. Residue Lys637 is modified to N6-acetyllysine. Lys803 carries the N6-acetyllysine modification. Phosphoserine is present on residues Ser924, Ser982, Ser999, Ser1029, Ser1031, and Ser1041. An SH3 domain is found at 967 to 1026 (TGKELVLALYDYQEKSPREVTMKKGDILTLLNSTNKDWWKVEVNDRQGFVPAAYVKKLDP). A Spectrin 10 repeat occupies 1096–1166 (LFREANELQQ…LESEGLMAEE (71 aa)). Phosphotyrosine is present on Tyr1176. Phosphoserine occurs at positions 1190, 1207, 1217, 1291, 1306, 1323, and 1338. One copy of the Spectrin 11 repeat lies at 1233–1336 (HEVQRFHRDA…RADQRKAKLG (104 aa)). Spectrin repeat units lie at residues 1339–1442 (HDLQ…MMLD) and 1446–1549 (ELQL…KLGE). Lys1519 carries the N6-acetyllysine modification. Ser1550, Ser1557, Ser1578, Ser1615, and Ser1647 each carry phosphoserine. Spectrin repeat units follow at residues 1552 to 1656 (TLQQ…KLKE), 1659 to 1762 (KQQN…KLNE), 1764 to 1868 (HRLH…RLEE), 1871 to 1974 (EYQQ…KLDE), 1978 to 2081 (FLQF…KLLE), 2092 to 2194 (LFLT…LELQ), and 2206 to 2310 (LRQE…NLEQ). Residue Thr2020 is modified to Phosphothreonine. At Lys2052 the chain carries N6-acetyllysine. EF-hand domains lie at 2323–2358 (EALK…LGYD), 2366–2401 (EPDP…RETE), and 2404–2439 (KSSE…EQAD). The Ca(2+) site is built by Asp2336, Asp2338, Ser2340, Arg2342, Glu2347, Asp2379, Asn2381, Asp2383, His2385, and Glu2390. Lys2421 carries the N6-acetyllysine modification.

It belongs to the spectrin family. In terms of assembly, like erythrocyte spectrin, the spectrin-like proteins are capable of forming dimers which can further associate to tetramers. Interacts (via C-terminal spectrin repeats) with TRPC4. Interacts with CALM and EMD. Interacts with isoform 1 of ACP1. Identified in a complex with ACTN4, CASK, IQGAP1, MAGI2, NPHS1 and SPTBN1. Interacts with SHANK3 (via ANK repeats). Interacts with CLN3; this interaction regulates the fodrin localization at the plasma membrane. Post-translationally, phosphorylation of Tyr-1176 decreases sensitivity to cleavage by calpain in vitro.

It localises to the cytoplasm. The protein localises to the cytoskeleton. It is found in the cell cortex. In terms of biological role, fodrin, which seems to be involved in secretion, interacts with calmodulin in a calcium-dependent manner and is thus candidate for the calcium-dependent movement of the cytoskeleton at the membrane. The protein is Spectrin alpha chain, non-erythrocytic 1 (SPTAN1) of Homo sapiens (Human).